A 91-amino-acid polypeptide reads, in one-letter code: Probable Fe(2+)-trafficking protein (91 aa).

This sequence belongs to the Fe(2+)-trafficking protein family.

Functionally, could be a mediator in iron transactions between iron acquisition and iron-requiring processes, such as synthesis and/or repair of Fe-S clusters in biosynthetic enzymes. The protein is Probable Fe(2+)-trafficking protein of Ralstonia nicotianae (strain ATCC BAA-1114 / GMI1000) (Ralstonia solanacearum).